A 158-amino-acid polypeptide reads, in one-letter code: 6,7-dimethyl-8-ribityllumazine synthase (158 aa).

Residues F23, 57-59 (AFE), and 81-83 (TVI) contribute to the 5-amino-6-(D-ribitylamino)uracil site. Residue 86–87 (GT) coordinates (2S)-2-hydroxy-3-oxobutyl phosphate. H89 (proton donor) is an active-site residue. Residue F114 participates in 5-amino-6-(D-ribitylamino)uracil binding. A (2S)-2-hydroxy-3-oxobutyl phosphate-binding site is contributed by R128.

It belongs to the DMRL synthase family.

It carries out the reaction (2S)-2-hydroxy-3-oxobutyl phosphate + 5-amino-6-(D-ribitylamino)uracil = 6,7-dimethyl-8-(1-D-ribityl)lumazine + phosphate + 2 H2O + H(+). Its pathway is cofactor biosynthesis; riboflavin biosynthesis; riboflavin from 2-hydroxy-3-oxobutyl phosphate and 5-amino-6-(D-ribitylamino)uracil: step 1/2. Catalyzes the formation of 6,7-dimethyl-8-ribityllumazine by condensation of 5-amino-6-(D-ribitylamino)uracil with 3,4-dihydroxy-2-butanone 4-phosphate. This is the penultimate step in the biosynthesis of riboflavin. In Desulforudis audaxviator (strain MP104C), this protein is 6,7-dimethyl-8-ribityllumazine synthase.